Here is a 379-residue protein sequence, read N- to C-terminus: Cytochrome b (379 aa).

The next 8 membrane-spanning stretches (helical) occupy residues 33 to 53 (FGSL…FLAM), 77 to 98 (WLIR…FLHV), 113 to 133 (WNIG…GYVL), 178 to 198 (FFAF…VHLL), 226 to 246 (IKDV…VLFS), 288 to 308 (LGGV…PILH), 320 to 340 (LSQC…WIGG), and 347 to 367 (FITI…LALP). Positions 83 and 97 each coordinate heme b. 2 residues coordinate heme b: His182 and His196.

It belongs to the cytochrome b family. In terms of assembly, the cytochrome bc1 complex contains 11 subunits: 3 respiratory subunits (MT-CYB, CYC1 and UQCRFS1), 2 core proteins (UQCRC1 and UQCRC2) and 6 low-molecular weight proteins (UQCRH/QCR6, UQCRB/QCR7, UQCRQ/QCR8, UQCR10/QCR9, UQCR11/QCR10 and a cleavage product of UQCRFS1). This cytochrome bc1 complex then forms a dimer. Heme b is required as a cofactor.

The protein resides in the mitochondrion inner membrane. Its function is as follows. Component of the ubiquinol-cytochrome c reductase complex (complex III or cytochrome b-c1 complex) that is part of the mitochondrial respiratory chain. The b-c1 complex mediates electron transfer from ubiquinol to cytochrome c. Contributes to the generation of a proton gradient across the mitochondrial membrane that is then used for ATP synthesis. This Sciurus niger (Eastern fox squirrel) protein is Cytochrome b (MT-CYB).